Consider the following 629-residue polypeptide: Chaperone protein HtpG (629 aa).

The tract at residues 1–335 (MSEVETSVEK…TADLPLNVSR (335 aa)) is a; substrate-binding. A b region spans residues 336 to 551 (EMIQESPLLA…EQGPDRQLQK (216 aa)). Residues 552–629 (MLQDAGRIEG…SRVFGRALKE (78 aa)) are c.

The protein belongs to the heat shock protein 90 family. Homodimer.

Its subcellular location is the cytoplasm. In terms of biological role, molecular chaperone. Has ATPase activity. The chain is Chaperone protein HtpG from Rhizobium meliloti (strain 1021) (Ensifer meliloti).